The primary structure comprises 275 residues: MSQQLQQIIDNTWENRAELSPKAASAEIREAVAHAIEQLDRGALRVAEKIDGAWTVHQWLKKAVLLSFRLEDNAPMPAGGYSQFYDKVPSKFANYTAEDFAAGGFRVVPPAIARRGSFIAKNVVLMPSYTNIGAYVDEGTMVDTWATVGSCAQIGKNVHLSGGVGIGGVLEPLQANPVIIEDNCFIGARSEVVEGVIVEENSVISMGVYLGQSTKIYDRETGEVTYGRIPAGSVVVAGNLPAKDGTHSLYCAVIVKKVDAKTRAKVGLNELLRGD.

Residues Arg-106 and Asp-143 each contribute to the substrate site.

Belongs to the transferase hexapeptide repeat family. Homotrimer.

The protein resides in the cytoplasm. It catalyses the reaction (S)-2,3,4,5-tetrahydrodipicolinate + succinyl-CoA + H2O = (S)-2-succinylamino-6-oxoheptanedioate + CoA. It participates in amino-acid biosynthesis; L-lysine biosynthesis via DAP pathway; LL-2,6-diaminopimelate from (S)-tetrahydrodipicolinate (succinylase route): step 1/3. This Burkholderia pseudomallei (strain 1106a) protein is 2,3,4,5-tetrahydropyridine-2,6-dicarboxylate N-succinyltransferase.